Here is a 453-residue protein sequence, read N- to C-terminus: Acyl-coenzyme A thioesterase 2, mitochondrial (453 aa).

A mitochondrion-targeting transit peptide spans 1–42; it reads MVASSFAVLRASRLCQWGWKSWTQLSGPPPLSTGGRTTFART. The residue at position 83 (lysine 83) is an N6-acetyllysine. Catalysis depends on charge relay system residues serine 273, aspartate 365, and histidine 399. Residue lysine 447 is modified to N6-succinyllysine.

It belongs to the C/M/P thioester hydrolase family. As to quaternary structure, monomer. In terms of processing, the N-terminus is blocked. Constitutively expressed in heart and brown fat. Strongly induced in liver, and weakly in kidney, in peroxisome proliferator treated rat.

The protein resides in the mitochondrion matrix. The enzyme catalyses hexadecanoyl-CoA + H2O = hexadecanoate + CoA + H(+). It carries out the reaction tetradecanoyl-CoA + H2O = tetradecanoate + CoA + H(+). It catalyses the reaction octadecanoyl-CoA + H2O = octadecanoate + CoA + H(+). The catalysed reaction is eicosanoyl-CoA + H2O = eicosanoate + CoA + H(+). The enzyme catalyses decanoyl-CoA + H2O = decanoate + CoA + H(+). It carries out the reaction dodecanoyl-CoA + H2O = dodecanoate + CoA + H(+). It catalyses the reaction (9Z)-octadecenoyl-CoA + H2O = (9Z)-octadecenoate + CoA + H(+). The catalysed reaction is (9Z)-hexadecenoyl-CoA + H2O = (9Z)-hexadecenoate + CoA + H(+). The enzyme catalyses (9E)-octadecenoyl-CoA + H2O = (9E)-octadecenoate + CoA + H(+). It carries out the reaction (9Z,12Z)-octadecadienoyl-CoA + H2O = (9Z,12Z)-octadecadienoate + CoA + H(+). Its pathway is lipid metabolism; fatty acid metabolism. Catalyzes the hydrolysis of acyl-CoAs into free fatty acids and coenzyme A (CoASH), regulating their respective intracellular levels. Displays higher activity toward long chain acyl CoAs (C14-C20). The enzyme is involved in enhancing the hepatic fatty acid oxidation in mitochondria. The polypeptide is Acyl-coenzyme A thioesterase 2, mitochondrial (Acot2) (Rattus norvegicus (Rat)).